The primary structure comprises 215 residues: Sodium channel regulatory subunit beta-3 (215 aa).

Residues 1-24 form the signal peptide; the sequence is MPAFNRLLPLASLVLIYWVRVCFP. The Ig-like C2-type domain maps to 25–138; it reads VCVEVPSETE…EAHRPFVKTT (114 aa). At 25-156 the chain is on the extracellular side; the sequence is VCVEVPSETE…EEAGEDFTSV (132 aa). Intrachain disulfides connect Cys-26/Cys-48 and Cys-45/Cys-120. N-linked (GlcNAc...) asparagine glycosylation is found at Asn-95, Asn-109, Asn-113, and Asn-121. A helical membrane pass occupies residues 157-178; sequence VSEIMMYILLVFLTLWLFIEMI. Residues 179–215 are Cytoplasmic-facing; the sequence is YCYRKVSKAEEAAQENASDYLAIPSENKENSVVPVEE.

It belongs to the sodium channel auxiliary subunit SCN3B (TC 8.A.17) family. As to quaternary structure, a voltage-gated sodium (Nav) channel consists of an ion-conducting pore-forming alpha subunit functional on its own that is regulated by one or more beta subunits. Forms homodimers and homotrimers. SCN3B is non-covalently associated with alpha subunits and induces the formation of alpha subunit oligomers, including trimers. Interacts with SCN5A/Nav1.5; regulatory subunit of SCN5A/Nav1.5. Interacts with SCN7A/Nav2.1; probable regulatory subunit of SCN7A/Nav2.1. Interacts with SCN10A; regulatory subunit of SCN10A/Nav1.8. Interacts with NFASC; probably involved in targeting the sodium channels to the nodes of Ranvier. In terms of processing, intramolecular disulfide bonds favor the voltage-gated sodium channel oligomeric complex assembly. N-glycosylated.

It localises to the cell membrane. Its function is as follows. Regulatory subunit of multiple voltage-gated sodium (Nav) channels directly mediating the depolarization of excitable membranes. Navs, also called VGSCs (voltage-gated sodium channels) or VDSCs (voltage-dependent sodium channels), operate by switching between closed and open conformations depending on the voltage difference across the membrane. In the open conformation they allow Na(+) ions to selectively pass through the pore, along their electrochemical gradient. The influx of Na+ ions provokes membrane depolarization, initiating the propagation of electrical signals throughout cells and tissues. The accessory beta subunits participate in localization and functional modulation of the Nav channels. Modulates the activity of SCN2A/Nav1.2, causing a hyperpolarizing shift in the voltage-dependence of inactivation of the channel and increasing the fraction of channels operating in the fast gating mode. Modulates the activity of SCN5A/Nav1.5. Could also regulate the atypical sodium channel SCN7A/Nav2.1. Modulates the activity of SCN10A/Nav1.8, regulating its oligomerization and accelerating the recovery from inactivation. The chain is Sodium channel regulatory subunit beta-3 from Mus musculus (Mouse).